The chain runs to 226 residues: ATP-dependent dethiobiotin synthetase BioD (226 aa).

14-19 is an ATP binding site; that stretch reads GIGKTF. T18 is a Mg(2+) binding site. K39 is a catalytic residue. Residue S43 coordinates substrate. Residues D56, 117-120, 177-178, 206-208, and N213 contribute to the ATP site; these read EGVG, NT, and PHI. Residues D56 and E117 each contribute to the Mg(2+) site.

This sequence belongs to the dethiobiotin synthetase family. Homodimer. Mg(2+) serves as cofactor.

The protein resides in the cytoplasm. It carries out the reaction (7R,8S)-7,8-diammoniononanoate + CO2 + ATP = (4R,5S)-dethiobiotin + ADP + phosphate + 3 H(+). It functions in the pathway cofactor biosynthesis; biotin biosynthesis; biotin from 7,8-diaminononanoate: step 1/2. Catalyzes a mechanistically unusual reaction, the ATP-dependent insertion of CO2 between the N7 and N8 nitrogen atoms of 7,8-diaminopelargonic acid (DAPA, also called 7,8-diammoniononanoate) to form a ureido ring. This chain is ATP-dependent dethiobiotin synthetase BioD, found in Xylella fastidiosa (strain Temecula1 / ATCC 700964).